The chain runs to 468 residues: Glutamate--tRNA ligase 2 (468 aa).

Residues 11–21 (PSPTGFLHIGG) carry the 'HIGH' region motif. The 'KMSKS' region motif lies at 239 to 243 (KLSKR). Lys-242 is an ATP binding site.

This sequence belongs to the class-I aminoacyl-tRNA synthetase family. Glutamate--tRNA ligase type 1 subfamily. As to quaternary structure, monomer.

The protein localises to the cytoplasm. The catalysed reaction is tRNA(Glu) + L-glutamate + ATP = L-glutamyl-tRNA(Glu) + AMP + diphosphate. In terms of biological role, catalyzes the attachment of glutamate to tRNA(Glu) in a two-step reaction: glutamate is first activated by ATP to form Glu-AMP and then transferred to the acceptor end of tRNA(Glu). The chain is Glutamate--tRNA ligase 2 from Ruegeria pomeroyi (strain ATCC 700808 / DSM 15171 / DSS-3) (Silicibacter pomeroyi).